We begin with the raw amino-acid sequence, 968 residues long: Alanine--tRNA ligase, cytoplasmic (968 aa).

Residue M1 is modified to N-acetylmethionine. S3 and S8 each carry phosphoserine. An N6-acetyllysine modification is found at K19. ATP-binding positions include R77, H95, W176, and 214-216 (IWN). 2 residues coordinate L-alanine: N216 and D239. G243 lines the ATP pocket. 2 positions are modified to phosphoserine: S399 and S555. Zn(2+) contacts are provided by H605, H609, C723, and H727. Residues 750–763 (RRIVAVTGAEAQKA) carry the Nuclear localization signal motif. Residue K876 is modified to N6-acetyllysine. At K943 the chain carries N6,N6,N6-trimethyllysine; alternate. Position 943 is an N6,N6-dimethyllysine; alternate (K943). K943 is subject to N6-methyllysine; alternate.

It belongs to the class-II aminoacyl-tRNA synthetase family. As to quaternary structure, monomer. Interacts with ANKRD16; the interaction is direct. It depends on Zn(2+) as a cofactor. ISGylated. In terms of processing, methylation at 'Lys-943' by METTL21C.

The protein resides in the cytoplasm. The protein localises to the nucleus. The catalysed reaction is tRNA(Ala) + L-alanine + ATP = L-alanyl-tRNA(Ala) + AMP + diphosphate. It carries out the reaction (S)-lactate + ATP + H(+) = (S)-lactoyl-AMP + diphosphate. It catalyses the reaction (S)-lactoyl-AMP + L-lysyl-[protein] = N(6)-[(S)-lactoyl]-L-lysyl-[protein] + AMP + 2 H(+). The protein lactyltransferase activity is inhibited by beta-alanine. In terms of biological role, catalyzes the attachment of alanine to tRNA(Ala) in a two-step reaction: alanine is first activated by ATP to form Ala-AMP and then transferred to the acceptor end of tRNA(Ala). Also edits incorrectly charged tRNA(Ala) via its editing domain. In presence of high levels of lactate, also acts as a protein lactyltransferase that mediates lactylation of lysine residues in target proteins, such as TEAD1, TP53/p53 and YAP1. Protein lactylation takes place in a two-step reaction: lactate is first activated by ATP to form lactate-AMP and then transferred to lysine residues of target proteins. Acts as an inhibitor of TP53/p53 activity by catalyzing lactylation of TP53/p53. Acts as a positive regulator of the Hippo pathway by mediating lactylation of TEAD1 and YAP1. This Homo sapiens (Human) protein is Alanine--tRNA ligase, cytoplasmic.